Here is a 643-residue protein sequence, read N- to C-terminus: Manganese lipoxygenase (643 aa).

One can recognise a Lipoxygenase domain in the interval 166–643; sequence WYTDEVFAQQ…PEQLANAIVI (478 aa). The Mn(2+) site is built by His-325, His-330, His-510, Asn-514, and Ile-643.

It belongs to the lipoxygenase family. It depends on Mn(2+) as a cofactor.

The catalysed reaction is (9Z,12Z)-octadecadienoate + O2 = (13S)-hydroperoxy-(9Z,11E)-octadecadienoate. In terms of biological role, lipoxygenase that metabolizes linoleic and alpha-linolenic acids to 13S-hydroperoxy fatty acids. The sequence is that of Manganese lipoxygenase from Pleurotus sapidus (Oyster mushroom).